The primary structure comprises 504 residues: Zinc finger CCCH domain-containing protein 18 (504 aa).

Positions 40–69 (SNADLLEVHEELLAAIKDAEEGLLHLKRSR) form a coiled coil. Positions 77–105 (IFPNQEPTSEAPEVAVDPPDDVEPEPLEP) are disordered. The span at 94–104 (PPDDVEPEPLE) shows a compositional bias: acidic residues. The segment at 146 to 173 (SENMSMCKFFLQQRCRFGSNCRLSHGIV) adopts a C3H1-type zinc-finger fold. Positions 230 to 276 (GSSARLPSDSLSISEYADESDEDGEGSSSDEGSDFSEDGDQEDESVH) are disordered. 2 stretches are compositionally biased toward acidic residues: residues 245–254 (YADESDEDGE) and 260–272 (EGSD…DQED). The G-patch domain maps to 304 to 350 (TRGVASKMMAKMGYREGMGLGVSGQGMLDPIPVKVLPPKQSLDHAVA). Disordered regions lie at residues 351 to 390 (ASEV…EEER), 406 to 432 (AEGS…DRRS), and 482 to 504 (EATH…WLKF). The segment covering 361–374 (GKKRSRGGKRKREK) has biased composition (basic residues). Basic and acidic residues-rich tracts occupy residues 375–390 (KFAE…EEER), 413–432 (SKKD…DRRS), and 493–504 (ARKEKEKKWLKF). Residues 430–500 (RRSLLAYDDE…AVARKEKEKK (71 aa)) are a coiled coil.

The protein is Zinc finger CCCH domain-containing protein 18 of Oryza sativa subsp. japonica (Rice).